The following is a 331-amino-acid chain: Pectinesterase (331 aa).

Positions 1-17 (MVKSVLASALFAVSALA) are cleaved as a signal peptide. Position 139 (Gln139) interacts with substrate. Asp162 acts as the Proton donor in catalysis. Asp183 functions as the Nucleophile in the catalytic mechanism. Substrate-binding residues include Arg248 and Trp250.

This sequence belongs to the pectinesterase family.

The protein localises to the secreted. The catalysed reaction is [(1-&gt;4)-alpha-D-galacturonosyl methyl ester](n) + n H2O = [(1-&gt;4)-alpha-D-galacturonosyl](n) + n methanol + n H(+). The protein operates within glycan metabolism; pectin degradation; 2-dehydro-3-deoxy-D-gluconate from pectin: step 1/5. Its function is as follows. Involved in maceration and soft-rotting of plant tissue. The protein is Pectinesterase (pme1) of Aspergillus aculeatus.